We begin with the raw amino-acid sequence, 614 residues long: Phosphomethylpyrimidine synthase (614 aa).

Substrate is bound by residues Asn226, Met255, Tyr284, His320, 340 to 342, 381 to 384, and Glu420; these read SRG and DGLR. Residue His424 coordinates Zn(2+). Tyr447 is a binding site for substrate. His488 is a binding site for Zn(2+). Residues Cys568, Cys571, and Cys576 each coordinate [4Fe-4S] cluster.

Belongs to the ThiC family. Homodimer. [4Fe-4S] cluster serves as cofactor.

The enzyme catalyses 5-amino-1-(5-phospho-beta-D-ribosyl)imidazole + S-adenosyl-L-methionine = 4-amino-2-methyl-5-(phosphooxymethyl)pyrimidine + CO + 5'-deoxyadenosine + formate + L-methionine + 3 H(+). Its pathway is cofactor biosynthesis; thiamine diphosphate biosynthesis. Its function is as follows. Catalyzes the synthesis of the hydroxymethylpyrimidine phosphate (HMP-P) moiety of thiamine from aminoimidazole ribotide (AIR) in a radical S-adenosyl-L-methionine (SAM)-dependent reaction. The chain is Phosphomethylpyrimidine synthase from Acidovorax sp. (strain JS42).